The chain runs to 432 residues: Tol-Pal system protein TolB (432 aa).

The N-terminal stretch at 1–21 (MKHVRIFATLLALLVISVTPA) is a signal peptide.

The protein belongs to the TolB family. The Tol-Pal system is composed of five core proteins: the inner membrane proteins TolA, TolQ and TolR, the periplasmic protein TolB and the outer membrane protein Pal. They form a network linking the inner and outer membranes and the peptidoglycan layer.

It localises to the periplasm. In terms of biological role, part of the Tol-Pal system, which plays a role in outer membrane invagination during cell division and is important for maintaining outer membrane integrity. The chain is Tol-Pal system protein TolB from Geobacter sulfurreducens (strain ATCC 51573 / DSM 12127 / PCA).